The primary structure comprises 35 residues: Photosystem II reaction center protein T (35 aa).

Residues 3–23 (ALVYTFLLVGTLGIIFFAIFF) traverse the membrane as a helical segment.

This sequence belongs to the PsbT family. PSII is composed of 1 copy each of membrane proteins PsbA, PsbB, PsbC, PsbD, PsbE, PsbF, PsbH, PsbI, PsbJ, PsbK, PsbL, PsbM, PsbT, PsbY, PsbZ, Psb30/Ycf12, at least 3 peripheral proteins of the oxygen-evolving complex and a large number of cofactors. It forms dimeric complexes.

It localises to the plastid. It is found in the chloroplast thylakoid membrane. Functionally, found at the monomer-monomer interface of the photosystem II (PS II) dimer, plays a role in assembly and dimerization of PSII. PSII is a light-driven water plastoquinone oxidoreductase, using light energy to abstract electrons from H(2)O, generating a proton gradient subsequently used for ATP formation. The protein is Photosystem II reaction center protein T of Chara vulgaris (Common stonewort).